An 886-amino-acid chain; its full sequence is Extended synaptotagmin-3 (886 aa).

Residues 1 to 21 (MRAEEPCAPGAPSALGAQRTP) are disordered. Topologically, residues 1 to 29 (MRAEEPCAPGAPSALGAQRTPGPELRLSS) are cytoplasmic. A run of 2 helical transmembrane segments spans residues 30-50 (QLLP…GPVY) and 51-71 (LAGY…LWMW). Residues 72 to 886 (WRRNRRGKLG…ELTPNGQPRS (815 aa)) lie on the Cytoplasmic side of the membrane. The SMP-LTD domain maps to 114–291 (DVERVEWANK…LPNRVTVPVK (178 aa)). C2 domains follow at residues 291-408 (KKGL…DEWF) and 426-566 (SLLT…QLDH). The Ca(2+) site is built by Lys321, Asp322, Asp332, Asp379, Glu380, Asp381, Asp383, Asp385, and Asp386. The tract at residues 613-673 (QGPKAQPQEE…PEPKGKDSAK (61 aa)) is disordered. The segment covering 642–659 (RSTTTTTSATTVATEPTS) has biased composition (low complexity). Residues 664–673 (PEPKGKDSAK) show a composition bias toward basic and acidic residues. One can recognise a C2 3 domain in the interval 754-876 (QLGEIQLTVR…DLIKGFSQWY (123 aa)). A required for phosphatidylinositol 4,5-bisphosphate-dependent location at the cell membrane region spans residues 801–808 (RKWACRKK).

It belongs to the extended synaptotagmin family. In terms of assembly, interacts with ESYT1 and ESYT2. As to expression, widely expressed with high level in cerebellum and skin.

The protein localises to the cell membrane. The protein resides in the endoplasmic reticulum membrane. In terms of biological role, binds glycerophospholipids in a barrel-like domain and may play a role in cellular lipid transport. Tethers the endoplasmic reticulum to the cell membrane and promotes the formation of appositions between the endoplasmic reticulum and the cell membrane. The polypeptide is Extended synaptotagmin-3 (Homo sapiens (Human)).